Here is a 348-residue protein sequence, read N- to C-terminus: Dihydroorotase (348 aa).

Residues His14 and His16 each coordinate Zn(2+). Substrate is bound by residues His16–Arg18 and Asn42. Lys100, His137, and His175 together coordinate Zn(2+). Residue Lys100 is modified to N6-carboxylysine. His137 is a substrate binding site. Residue Leu220 participates in substrate binding. Zn(2+) is bound at residue Asp248. Asp248 is an active-site residue. His252 and Ala264 together coordinate substrate.

The protein belongs to the metallo-dependent hydrolases superfamily. DHOase family. Class II DHOase subfamily. As to quaternary structure, homodimer. It depends on Zn(2+) as a cofactor.

It carries out the reaction (S)-dihydroorotate + H2O = N-carbamoyl-L-aspartate + H(+). It participates in pyrimidine metabolism; UMP biosynthesis via de novo pathway; (S)-dihydroorotate from bicarbonate: step 3/3. Functionally, catalyzes the reversible cyclization of carbamoyl aspartate to dihydroorotate. This chain is Dihydroorotase, found in Pseudomonas fluorescens (strain Pf0-1).